We begin with the raw amino-acid sequence, 498 residues long: MAKYAAAIDQGTTSTRCMIFDHSGNVICYDQKEHEQIYPRPGWVEHSPDEIWERTQSVIRGALSKGGLSASDIVAVGITNQRETTVVWNRKTGRPVYNAIVWQDTRTDQICNELAADGGQDRFRAKVGLPLATYFSGPKIRWILDNVPDAREAAEAGDVVFGNIDTFLTWWLTGGPNGGVHVTDVTNASRTMLMNLETLDWDDEILSVMGIPRQMLPKIVPSSMVYGTAVGELAGVPVAGILGDQQAAMVGQTCFDVGEAKNTYGTGSFMLLNTGTKIVPSKSGLLTTVCYKFGDQPAVYALEGSIAITGALVQWLRDNLGLITTSAEVEALANLVEDNGGIYFVPAFSGLFAPYWRSDARGVIVGLTRYVNKGHLARAVLEATAYQTREVLDAMEQDSGVKLTALKVDGGMVYNNTLMQFQADILGVPVIRPKVAETTSLGAAYAAGLAVGFWSNTDEMRANWGVDHTWTPQMDEATRERLYRGWKKAVTRTFDWVE.

Thr-12 is a binding site for ADP. ATP contacts are provided by Thr-12, Thr-13, and Ser-14. Sn-glycerol 3-phosphate is bound at residue Thr-12. Arg-16 provides a ligand contact to ADP. Residues Arg-82, Glu-83, Tyr-134, and Asp-244 each contribute to the sn-glycerol 3-phosphate site. Glycerol is bound by residues Arg-82, Glu-83, Tyr-134, Asp-244, and Gln-245. Residues Thr-266 and Gly-310 each contribute to the ADP site. ATP is bound by residues Thr-266, Gly-310, Gln-314, and Gly-411. 2 residues coordinate ADP: Gly-411 and Asn-415.

This sequence belongs to the FGGY kinase family.

It carries out the reaction glycerol + ATP = sn-glycerol 3-phosphate + ADP + H(+). The protein operates within polyol metabolism; glycerol degradation via glycerol kinase pathway; sn-glycerol 3-phosphate from glycerol: step 1/1. With respect to regulation, inhibited by fructose 1,6-bisphosphate (FBP). In terms of biological role, key enzyme in the regulation of glycerol uptake and metabolism. Catalyzes the phosphorylation of glycerol to yield sn-glycerol 3-phosphate. This Chloroflexus aggregans (strain MD-66 / DSM 9485) protein is Glycerol kinase.